The sequence spans 185 residues: Ribosome maturation factor RimM (185 aa).

The PRC barrel domain maps to 106-185 (EGDYYWKDLM…SIEVDWDPGF (80 aa)).

The protein belongs to the RimM family. In terms of assembly, binds ribosomal protein uS19.

Its subcellular location is the cytoplasm. In terms of biological role, an accessory protein needed during the final step in the assembly of 30S ribosomal subunit, possibly for assembly of the head region. Essential for efficient processing of 16S rRNA. May be needed both before and after RbfA during the maturation of 16S rRNA. It has affinity for free ribosomal 30S subunits but not for 70S ribosomes. This chain is Ribosome maturation factor RimM, found in Shigella dysenteriae serotype 1 (strain Sd197).